The primary structure comprises 1076 residues: Zinc-regulated protein 8 (1076 aa).

Basic residues predominate over residues 1–11; sequence MRSFIKAHKKS. Disordered stretches follow at residues 1–66, 85–162, 190–223, and 234–253; these read MRSF…PGFE, SNLN…RTTD, PASP…TSPS, and KNKG…SSKK. Positions 23–34 are enriched in polar residues; that stretch reads NFSGNTNNSSQR. Over residues 93–106 the composition is skewed to low complexity; that stretch reads STPTTSTNQTTSNS. Over residues 107–117 the composition is skewed to polar residues; the sequence is FVLQNPPTKNT. Residues 118–128 show a composition bias toward pro residues; that stretch reads GPPPPLPPPLF. Composition is skewed to polar residues over residues 193–206 and 214–223; these read PASN…SKQF and ENLTSTTSPS. Phosphoserine occurs at positions 275 and 354. Disordered regions lie at residues 357 to 450, 534 to 557, and 566 to 585; these read IRHG…DDES, LSDD…ESDN, and GKET…SLGE. Residues 362–378 show a composition bias toward polar residues; sequence LQSSPSKVNKNDSQNET. 2 positions are modified to phosphoserine: Ser-403 and Ser-407. The segment covering 408–418 has biased composition (basic and acidic residues); the sequence is VNEKETHKAND. Acidic residues predominate over residues 419–450; it reads CNDESSENGDGDNDHDDDYDDDDDDDDDDDES. Residues 576–585 show a composition bias toward basic and acidic residues; the sequence is GHHDDASLGE. Ser-632 and Ser-676 each carry phosphoserine. Disordered stretches follow at residues 658–701, 713–762, 909–931, 1000–1020, and 1042–1076; these read NIIR…KPTV, SASD…PHSQ, RRTL…FSSV, HNVG…QISN, and PTNS…PKRA. Composition is skewed to polar residues over residues 690–701 and 739–748; these read LTGTTGSTKPTV and QVSLQSSLYE.

It belongs to the ZRG8 family. Interacts with BUD27, GIS1 and SSD1.

Its subcellular location is the cytoplasm. It is found in the bud. It localises to the bud neck. The protein resides in the bud tip. Functionally, involved in the integrity functions of RAM, a conserved signaling network that regulates maintenance of polarized growth and daughter-cell-specific transcription. This is Zinc-regulated protein 8 (ZRG8) from Saccharomyces cerevisiae (strain ATCC 204508 / S288c) (Baker's yeast).